Here is a 525-residue protein sequence, read N- to C-terminus: M-phase inducer phosphatase 1 (525 aa).

Residues 1 to 42 (MELGPEPPHRRRLLFTCSPTPAPQPTGKVQFGASRAGGLSPV) are disordered. Residues 74–84 (MGSSESTDSGF) carry the Phosphodegron motif. Ser-76 carries the phosphoserine; by CHEK1 modification. Phosphoserine; by NEK11 is present on residues Ser-79, Ser-82, and Ser-88. The residue at position 124 (Ser-124) is a Phosphoserine; by CHEK1 and CHEK2. A KEN box motif is present at residues 141–143 (KEN). Ser-178 carries the post-translational modification Phosphoserine; by CHEK1. The tract at residues 260 to 318 (FDSPSPCSSTSSCSTRAVKRADRSHEESPRGTKRRKSSEASPVKADVPEPTQLPHQSLS) is disordered. Low complexity predominate over residues 262-274 (SPSPCSSTSSCST). Over residues 278–289 (KRADRSHEESPR) the composition is skewed to basic and acidic residues. Ser-283 and Ser-296 each carry phosphoserine; by CHEK1 and CHEK2. Residues 377–483 (LIKEFVIIDC…FFLKCQSHCE (107 aa)) enclose the Rhodanese domain. Residue Cys-432 is part of the active site. At Thr-508 the chain carries Phosphothreonine; by CHEK1. Ser-514 and Ser-520 each carry phosphoserine; by PLK3.

The protein belongs to the MPI phosphatase family. Interacts with CCNB1/cyclin B1. Interacts with YWHAE/14-3-3 epsilon when phosphorylated. Interacts with CUL1 specifically when CUL1 is neddylated and active. Interacts with BTRC/BTRCP1 and FBXW11/BTRCP2. Interactions with CUL1, BTRC and FBXW11 are enhanced upon DNA damage. Interacts with CHEK2; mediates CDC25A phosphorylation and degradation in response to infrared-induced DNA damages. Interacts with HSP90AB1; prevents heat shock-mediated CDC25A degradation and contributes to cell cycle progression. Post-translationally, phosphorylated by CHEK1 on Ser-76, Ser-124, Ser-178, Ser-283, Ser-296 and Thr-508 during checkpoint mediated cell cycle arrest. Also phosphorylated by CHEK2 on Ser-124, Ser-283, and Ser-296 during checkpoint mediated cell cycle arrest. Phosphorylation on Ser-178 and Thr-508 creates binding sites for YWHAE/14-3-3 epsilon which inhibits CDC25A. Phosphorylation on Ser-76, Ser-124, Ser-178, Ser-283 and Ser-296 may also promote ubiquitin-dependent proteolysis of CDC25A by the SCF complex. Phosphorylation of CDC25A at Ser-76 by CHEK1 primes it for subsequent phosphorylation at Ser-79, Ser-82 and Ser-88 by NEK11. Phosphorylation by NEK11 is required for BTRC-mediated polyubiquitination and degradation. Phosphorylation by PIM1 leads to an increase in phosphatase activity. Phosphorylated by PLK3 following DNA damage, leading to promote its ubiquitination and degradation. Ubiquitinated by the anaphase promoting complex/cyclosome (APC/C) ubiquitin ligase complex that contains FZR1/CDH1 during G1 phase leading to its degradation by the proteasome. Ubiquitinated by a SCF complex containing BTRC and FBXW11 during S phase leading to its degradation by the proteasome. Deubiquitination by USP17L2/DUB3 leads to its stabilization.

The catalysed reaction is O-phospho-L-tyrosyl-[protein] + H2O = L-tyrosyl-[protein] + phosphate. With respect to regulation, stimulated by B-type cyclins. Stimulated by PIM1-mediated phosphorylation. In terms of biological role, tyrosine protein phosphatase which functions as a dosage-dependent inducer of mitotic progression. Directly dephosphorylates CDK1 and stimulates its kinase activity. Also dephosphorylates CDK2 in complex with cyclin-E, in vitro. The chain is M-phase inducer phosphatase 1 (Cdc25a) from Rattus norvegicus (Rat).